The primary structure comprises 240 residues: 2,3,4,5-tetrahydropyridine-2,6-dicarboxylate N-acetyltransferase (240 aa).

This sequence belongs to the transferase hexapeptide repeat family. DapH subfamily.

It carries out the reaction (S)-2,3,4,5-tetrahydrodipicolinate + acetyl-CoA + H2O = L-2-acetamido-6-oxoheptanedioate + CoA. The protein operates within amino-acid biosynthesis; L-lysine biosynthesis via DAP pathway; LL-2,6-diaminopimelate from (S)-tetrahydrodipicolinate (acetylase route): step 1/3. Catalyzes the transfer of an acetyl group from acetyl-CoA to tetrahydrodipicolinate. This Staphylococcus epidermidis (strain ATCC 35984 / DSM 28319 / BCRC 17069 / CCUG 31568 / BM 3577 / RP62A) protein is 2,3,4,5-tetrahydropyridine-2,6-dicarboxylate N-acetyltransferase.